We begin with the raw amino-acid sequence, 740 residues long: Protein SIEVE ELEMENT OCCLUSION B (740 aa).

Over residues 1–23 (MESLIKSQHAQQLAGHKNTTGKT) the composition is skewed to polar residues. Residues 1–27 (MESLIKSQHAQQLAGHKNTTGKTPSME) are disordered.

As to quaternary structure, can form homodimer. Expressed in phloem sieve elements.

In terms of biological role, scaffold protein required to form the phloem filament matrix in sieve elements. This chain is Protein SIEVE ELEMENT OCCLUSION B, found in Arabidopsis thaliana (Mouse-ear cress).